Consider the following 249-residue polypeptide: Aspartate/glutamate leucyltransferase (249 aa).

It belongs to the R-transferase family. Bpt subfamily.

Its subcellular location is the cytoplasm. The enzyme catalyses N-terminal L-glutamyl-[protein] + L-leucyl-tRNA(Leu) = N-terminal L-leucyl-L-glutamyl-[protein] + tRNA(Leu) + H(+). It carries out the reaction N-terminal L-aspartyl-[protein] + L-leucyl-tRNA(Leu) = N-terminal L-leucyl-L-aspartyl-[protein] + tRNA(Leu) + H(+). Its function is as follows. Functions in the N-end rule pathway of protein degradation where it conjugates Leu from its aminoacyl-tRNA to the N-termini of proteins containing an N-terminal aspartate or glutamate. In Brucella melitensis biotype 2 (strain ATCC 23457), this protein is Aspartate/glutamate leucyltransferase.